The following is a 298-amino-acid chain: N-acetylmuramic acid 6-phosphate etherase (298 aa).

Residues 55 to 218 (IHAQVSGGGR…STGLMIKSGK (164 aa)) form the SIS domain. Catalysis depends on glutamate 83, which acts as the Proton donor. Glutamate 114 is a catalytic residue.

The protein belongs to the GCKR-like family. MurNAc-6-P etherase subfamily. Homodimer.

It carries out the reaction N-acetyl-D-muramate 6-phosphate + H2O = N-acetyl-D-glucosamine 6-phosphate + (R)-lactate. It functions in the pathway amino-sugar metabolism; N-acetylmuramate degradation. It participates in amino-sugar metabolism; 1,6-anhydro-N-acetylmuramate degradation. Its pathway is cell wall biogenesis; peptidoglycan recycling. In terms of biological role, specifically catalyzes the cleavage of the D-lactyl ether substituent of MurNAc 6-phosphate, producing GlcNAc 6-phosphate and D-lactate. Together with AnmK, is also required for the utilization of anhydro-N-acetylmuramic acid (anhMurNAc) either imported from the medium or derived from its own cell wall murein, and thus plays a role in cell wall recycling. The chain is N-acetylmuramic acid 6-phosphate etherase from Escherichia coli (strain K12 / MC4100 / BW2952).